The chain runs to 174 residues: Small ribosomal subunit protein uS5 (174 aa).

One can recognise an S5 DRBM domain in the interval 17-80; it reads WQERVVQIRR…ADGKKHLIDV (64 aa).

It belongs to the universal ribosomal protein uS5 family. As to quaternary structure, part of the 30S ribosomal subunit. Contacts proteins S4 and S8.

Its function is as follows. With S4 and S12 plays an important role in translational accuracy. Located at the back of the 30S subunit body where it stabilizes the conformation of the head with respect to the body. This Thermosynechococcus vestitus (strain NIES-2133 / IAM M-273 / BP-1) protein is Small ribosomal subunit protein uS5.